The chain runs to 217 residues: Cytidylate kinase (217 aa).

An ATP-binding site is contributed by 11–19 (GPAGAGKST).

It belongs to the cytidylate kinase family. Type 1 subfamily.

It localises to the cytoplasm. It catalyses the reaction CMP + ATP = CDP + ADP. The enzyme catalyses dCMP + ATP = dCDP + ADP. The chain is Cytidylate kinase from Clostridium perfringens (strain SM101 / Type A).